Consider the following 245-residue polypeptide: DNA terminal protein (245 aa).

Positions 4–55 (KRLKKKLETKRKKSLLVSEGYSKKETKKLKGRELETVYKKKAHNRKNRERAR) match the Nuclear localization signal motif. Position 194 is an O-(5'-phospho-DNA)-tyrosine (tyrosine 194).

Interacts with the DNA-binding protein P1.

The protein localises to the virion. Acts as a primer for viral genomic replication. DNA terminal protein is covalently linked to the 5'-ends of both strands of the genome through a phosphodiester bond between the beta-hydroxyl group of a tyrosine residue and the 5'-phosphate of the terminal deoxythymidylate. This protein is essential for DNA replication and is involved in the priming of DNA elongation. The polypeptide is DNA terminal protein (Bacillus thuringiensis (Bacillus thuringiensis bacteriophage Bam35c)).